The chain runs to 643 residues: UPF0313 protein CLD_0573 (643 aa).

The Radical SAM core domain occupies 295–566 (AIKEVKFSIT…RMQRALLQFS (272 aa)). [4Fe-4S] cluster is bound by residues Cys-309, Cys-313, and Cys-316. Residues 598 to 643 (NKPYKKSHKKNNAKNNNNHYNKNNNKNKDISKKNKKNSLSKHKKRK) are disordered. A compositionally biased stretch (basic residues) spans 600–609 (PYKKSHKKNN). A compositionally biased stretch (low complexity) spans 610–621 (AKNNNNHYNKNN). The segment covering 630 to 643 (KNKKNSLSKHKKRK) has biased composition (basic residues).

The protein belongs to the UPF0313 family. It depends on [4Fe-4S] cluster as a cofactor.

The chain is UPF0313 protein CLD_0573 from Clostridium botulinum (strain Okra / Type B1).